Consider the following 388-residue polypeptide: Succinate--CoA ligase [ADP-forming] subunit beta (388 aa).

Residues 9 to 244 (KQLFAEYGLP…PSQDDAREAH (236 aa)) enclose the ATP-grasp domain. Residues Lys-46, 53-55 (GRG), Glu-99, Thr-102, and Glu-107 each bind ATP. The Mg(2+) site is built by Asn-199 and Asp-213. Residues Asn-264 and 321–323 (GIV) contribute to the substrate site.

It belongs to the succinate/malate CoA ligase beta subunit family. Heterotetramer of two alpha and two beta subunits. Mg(2+) is required as a cofactor.

The catalysed reaction is succinate + ATP + CoA = succinyl-CoA + ADP + phosphate. It carries out the reaction GTP + succinate + CoA = succinyl-CoA + GDP + phosphate. It participates in carbohydrate metabolism; tricarboxylic acid cycle; succinate from succinyl-CoA (ligase route): step 1/1. Functionally, succinyl-CoA synthetase functions in the citric acid cycle (TCA), coupling the hydrolysis of succinyl-CoA to the synthesis of either ATP or GTP and thus represents the only step of substrate-level phosphorylation in the TCA. The beta subunit provides nucleotide specificity of the enzyme and binds the substrate succinate, while the binding sites for coenzyme A and phosphate are found in the alpha subunit. The chain is Succinate--CoA ligase [ADP-forming] subunit beta from Pseudomonas putida (strain ATCC 700007 / DSM 6899 / JCM 31910 / BCRC 17059 / LMG 24140 / F1).